Reading from the N-terminus, the 287-residue chain is MSYTVRKIGQPYTLEHRVYIEKDGQPVSPFHDIPLYANAEKTVLNMIVEIPRWTNAKQEISKEEFLNPIKQDTKKGKLRFVRNCFPHKGYLWNYGAFPQTWEDPNVVHPETKAKGDNDPLDVCEIGELVGYPGQVKQVKVLGVMALLDEEETDWKVIVIDVNDPLAPKLNDIEDVERHLPGLLRATNEWFRIYKIPDGKPENQFAFSGEAKNKKYAEEVIHECADAWEKLVSGKSDRGDISLANSTLGNSDSVDSSKLASIPRGENLPPAPIDGTIDKWFFISGAAV.

R79 lines the diphosphate pocket. The Mg(2+) site is built by D116, D121, and D153. Residues 244–258 (NSTLGNSDSVDSSKL) show a composition bias toward polar residues. Positions 244 to 269 (NSTLGNSDSVDSSKLASIPRGENLPP) are disordered.

Belongs to the PPase family. Mg(2+) serves as cofactor.

It is found in the cytoplasm. The enzyme catalyses diphosphate + H2O = 2 phosphate + H(+). Functionally, involved in osmoadaptation. This chain is Inorganic pyrophosphatase (ipp1), found in Emericella nidulans (strain FGSC A4 / ATCC 38163 / CBS 112.46 / NRRL 194 / M139) (Aspergillus nidulans).